The sequence spans 801 residues: Potassium transporter 1 (801 aa).

The disordered stretch occupies residues 1–20 (MSSALEVEGSGSPGVEPAAT). Over 1-57 (MSSALEVEGSGSPGVEPAATATASRLKRHDSLFGDAEKVSGGKHHGGSAVSWAVTLH) the chain is Cytoplasmic. A helical membrane pass occupies residues 58–80 (LAFQSVGIIYGDIGTSPLYVYSS). Over 81 to 94 (TFPDGIGHRDDLVG) the chain is Extracellular. The helical transmembrane segment at 95–115 (VLSLILYTLIIIPMLKYVFIV) threads the bilayer. The Cytoplasmic portion of the chain corresponds to 116-181 (LYANDNGDGG…HKLESSRAAK (66 aa)). A helical transmembrane segment spans residues 182 to 202 (MALFFLTILGTSMVMGDGTLT). The Extracellular segment spans residues 203–219 (PAISVLSAVSGIREKAP). The chain crosses the membrane as a helical span at residues 220–240 (NLTQTQVVLISVAILFMLFSV). Topologically, residues 241-247 (QRFGTDK) are cytoplasmic. Residues 248–268 (VGYTFAPIISVWFLLIAGIGL) form a helical membrane-spanning segment. Residues 269–298 (YNLVVHEITILKAFNPWYIVQYFRRNGKKG) are Extracellular-facing. Residues 299 to 319 (WVSLGGVVLCVTGTEGMFADL) traverse the membrane as a helical segment. The Cytoplasmic segment spans residues 320 to 328 (GHFNIRAVQ). The chain crosses the membrane as a helical span at residues 329-349 (ISFNCILFPSVALCYIGQAAY). Residues 350–375 (LRKFPENVSDTFYKSIPGKYRDRLNF) are Extracellular-facing. A helical membrane pass occupies residues 376–398 (GPLFWPTFIVAILAAIIASQAML). The Cytoplasmic portion of the chain corresponds to 399-429 (SGAFAILSKALSLGCLPRVRVIHTSKKYEGQ). Residues 430–450 (VYIPEVNFMMGLASIIVTIAF) traverse the membrane as a helical segment. The Extracellular portion of the chain corresponds to 451–461 (RTTTSIGNAYG). The helical transmembrane segment at 462-482 (ICVVTTFMVTTHLMTVVMLLI) threads the bilayer. At 483-487 (WKKHL) the chain is on the cytoplasmic side. Residues 488-508 (VFILLFYCVFGFTEVVYLSSI) traverse the membrane as a helical segment. Residues 509-511 (LSK) lie on the Extracellular side of the membrane. A helical membrane pass occupies residues 512–532 (FVDGGYLPFCFAMVLMTMMAT). Topologically, residues 533–801 (WHYVHVRRYW…LLKVGITYEI (269 aa)) are cytoplasmic. Residues 679 to 728 (DDDDEAAARPRRSTSSAVHSEEAIQAASSGRTTASSVQLQAGGEPPAAMD) are disordered. Over residues 704-717 (AASSGRTTASSVQL) the composition is skewed to polar residues.

Belongs to the HAK/KUP transporter (TC 2.A.72.3) family. As to expression, expressed almost exclusively in roots.

It is found in the cell membrane. High-affinity potassium transporter. Also transports rubidium, with the same affinity and cesium, with a lower affinity. The protein is Potassium transporter 1 (HAK1) of Oryza sativa subsp. japonica (Rice).